Here is a 209-residue protein sequence, read N- to C-terminus: MRGLNLKPSRVYQTAAALLESESISQAPPWYKTIGSVPPSEILTRTQPVQHRGSNGRPRTKKASKLFKPQTIVYEEDRIRQEFFRDHPWELARPRIVLENDGRDGQRCDWTRKEFYALRQEEEIERRIAKEEAEYVGAYFHKGALEVGMELEDKSYEDWKAWATKEVEAANLLKQGAYTGVGAESEDADVLDEAAEADEGVEEPATVVA.

The protein belongs to the mitochondrion-specific ribosomal protein mS23 family. Component of the mitochondrial small ribosomal subunit.

The protein localises to the mitochondrion. The polypeptide is Small ribosomal subunit protein mS23 (rsm25) (Sclerotinia sclerotiorum (strain ATCC 18683 / 1980 / Ss-1) (White mold)).